Here is a 983-residue protein sequence, read N- to C-terminus: Pro-apoptotic serine protease NMA111 (983 aa).

The disordered stretch occupies residues 1-40 (MSVPTKRRLSFDESTNKRFLNGTHSTENNTSNIEVDEDYG). The segment covering 22–33 (GTHSTENNTSNI) has biased composition (polar residues). The serine protease stretch occupies residues 59–260 (WQETITKVVN…LPIYRPLRAL (202 aa)). Active-site charge relay system residues include His108, Asp139, and Ser222. PDZ domains lie at 287 to 365 (RRLG…QRGG) and 867 to 948 (FWSG…MSFD).

Belongs to the peptidase S1C family.

It localises to the nucleus. Nuclear serine protease which mediates apoptosis. The chain is Pro-apoptotic serine protease NMA111 (NMA111) from Scheffersomyces stipitis (strain ATCC 58785 / CBS 6054 / NBRC 10063 / NRRL Y-11545) (Yeast).